A 164-amino-acid chain; its full sequence is MALLTTDLCDAYADEPGAQLRAMNPMLIGYGGRARFGGPVTTLKLFEDNVRVRELLSAPGDGGVLVVDGGGSMRCALLGDRLAELGRENGWSGAIIYGCVRDSAELAQIDFGVQALNTHPLKSQKKGLGERDVSVTFAGVTIQSGDWLYADEDGVVVASRELTL.

Residues 79–82 (GDRL) and R101 each bind substrate. D102 contributes to the a divalent metal cation binding site.

Belongs to the class II aldolase/RraA-like family. As to quaternary structure, homotrimer. A divalent metal cation serves as cofactor.

It catalyses the reaction 4-hydroxy-4-methyl-2-oxoglutarate = 2 pyruvate. The enzyme catalyses oxaloacetate + H(+) = pyruvate + CO2. In terms of biological role, catalyzes the aldol cleavage of 4-hydroxy-4-methyl-2-oxoglutarate (HMG) into 2 molecules of pyruvate. Also contains a secondary oxaloacetate (OAA) decarboxylase activity due to the common pyruvate enolate transition state formed following C-C bond cleavage in the retro-aldol and decarboxylation reactions. This Halorhodospira halophila (strain DSM 244 / SL1) (Ectothiorhodospira halophila (strain DSM 244 / SL1)) protein is Putative 4-hydroxy-4-methyl-2-oxoglutarate aldolase.